Here is a 302-residue protein sequence, read N- to C-terminus: tRNA dimethylallyltransferase 2 (302 aa).

6–13 (GPTACGKT) contributes to the ATP binding site. A substrate-binding site is contributed by 8–13 (TACGKT). 2 interaction with substrate tRNA regions span residues 31 to 34 (DSRQ) and 154 to 158 (QRAIR).

The protein belongs to the IPP transferase family. As to quaternary structure, monomer. Mg(2+) serves as cofactor.

The catalysed reaction is adenosine(37) in tRNA + dimethylallyl diphosphate = N(6)-dimethylallyladenosine(37) in tRNA + diphosphate. Functionally, catalyzes the transfer of a dimethylallyl group onto the adenine at position 37 in tRNAs that read codons beginning with uridine, leading to the formation of N6-(dimethylallyl)adenosine (i(6)A). The chain is tRNA dimethylallyltransferase 2 from Porphyromonas gingivalis (strain ATCC BAA-308 / W83).